The chain runs to 607 residues: Zinc metalloproteinase-disintegrin-like atrase-A (607 aa).

The signal sequence occupies residues 1 to 20 (MIQALLVIICLAVFPHQGSS). A propeptide spanning residues 21 to 196 (IILESGNVND…KTSQLTNTPE (176 aa)) is cleaved from the precursor. Residues 205–398 (KYIEFYLVVD…ERPQCILNKP (194 aa)) form the Peptidase M12B domain. A Ca(2+)-binding site is contributed by Glu208. N-linked (GlcNAc...) asparagine glycans are attached at residues Asn220 and Asn270. Position 290 (Asp290) interacts with Ca(2+). Residue Asn301 is glycosylated (N-linked (GlcNAc...) asparagine). 3 disulfides stabilise this stretch: Cys314–Cys393, Cys353–Cys377, and Cys355–Cys360. Positions 338, 342, and 348 each coordinate Zn(2+). The Ca(2+) site is built by Cys393, Asn396, Asn411, Phe413, Glu415, Glu418, and Asp421. The Disintegrin domain occupies 406–492 (RPVCGNNFVE…ECPTDSLQRN (87 aa)). Disulfide bonds link Cys409-Cys438, Cys420-Cys433, Cys422-Cys428, Cys432-Cys455, Cys446-Cys452, Cys451-Cys477, Cys464-Cys484, Cys471-Cys503, Cys496-Cys508, Cys515-Cys565, Cys530-Cys573, Cys543-Cys553, Cys560-Cys599, and Cys593-Cys604. Asn434 carries N-linked (GlcNAc...) asparagine glycosylation. The D/ECD-tripeptide signature appears at 470-472 (DCD). Residues Asp472, Leu473, Glu475, Asp487, and Ser488 each contribute to the Ca(2+) site. Asn522 carries an N-linked (GlcNAc...) asparagine glycan.

This sequence belongs to the venom metalloproteinase (M12B) family. P-III subfamily. P-IIIa sub-subfamily. Monomer. It depends on Zn(2+) as a cofactor. Expressed by the venom gland.

It is found in the secreted. In terms of biological role, snake venom zinc metalloproteinase that inhibits platelet aggregation by cleaving platelet glycoprotein Ib alpha (GP1BA) at Glu-298/Asp-299, and abolishes binding of von Willebrand factor (VWF) to GPIBA. This chain is Zinc metalloproteinase-disintegrin-like atrase-A, found in Naja atra (Chinese cobra).